Consider the following 295-residue polypeptide: Inositol monophosphatase 1 (295 aa).

Residues Glu-73, Asp-92, Ile-94, Asp-95, and Asp-231 each coordinate Mg(2+). Residue Glu-73 coordinates substrate. Residues 94–97 (IDGT) and Asp-231 contribute to the substrate site.

The protein belongs to the inositol monophosphatase superfamily. Requires Mg(2+) as cofactor.

The protein localises to the cytoplasm. The protein resides in the nucleus. The catalysed reaction is a myo-inositol phosphate + H2O = myo-inositol + phosphate. The protein operates within polyol metabolism; myo-inositol biosynthesis; myo-inositol from D-glucose 6-phosphate: step 2/2. With respect to regulation, inhibited by Li(+) and Na(+). In terms of biological role, responsible for the provision of inositol required for synthesis of phosphatidylinositol and polyphosphoinositides. This chain is Inositol monophosphatase 1 (INM1), found in Saccharomyces cerevisiae (strain ATCC 204508 / S288c) (Baker's yeast).